The sequence spans 147 residues: Small ribosomal subunit protein uS12 (147 aa).

Belongs to the universal ribosomal protein uS12 family. As to quaternary structure, part of the 30S ribosomal subunit.

In terms of biological role, with S4 and S5 plays an important role in translational accuracy. Located at the interface of the 30S and 50S subunits. The sequence is that of Small ribosomal subunit protein uS12 from Hyperthermus butylicus (strain DSM 5456 / JCM 9403 / PLM1-5).